A 449-amino-acid polypeptide reads, in one-letter code: Bifunctional protein GlmU (449 aa).

The pyrophosphorylase stretch occupies residues 1-226 (MVAVAILAAG…FQEISGINDR (226 aa)). Residues 7–10 (LAAG), K21, Q73, and 78–79 (GT) contribute to the UDP-N-acetyl-alpha-D-glucosamine site. Residue D103 coordinates Mg(2+). UDP-N-acetyl-alpha-D-glucosamine is bound by residues G140, E155, N170, and N224. Mg(2+) is bound at residue N224. The linker stretch occupies residues 227-247 (FQLSAAYEILQDRIKEKWMKA). The N-acetyltransferase stretch occupies residues 248-449 (GVMIHQPDTV…KEIKGWRLQS (202 aa)). 2 residues coordinate UDP-N-acetyl-alpha-D-glucosamine: R329 and K347. Residue H359 is the Proton acceptor of the active site. UDP-N-acetyl-alpha-D-glucosamine-binding residues include Y362 and N373. Acetyl-CoA contacts are provided by residues A376, 382 to 383 (NY), A419, and R436.

It in the N-terminal section; belongs to the N-acetylglucosamine-1-phosphate uridyltransferase family. This sequence in the C-terminal section; belongs to the transferase hexapeptide repeat family. As to quaternary structure, homotrimer. Mg(2+) serves as cofactor.

The protein localises to the cytoplasm. The enzyme catalyses alpha-D-glucosamine 1-phosphate + acetyl-CoA = N-acetyl-alpha-D-glucosamine 1-phosphate + CoA + H(+). It carries out the reaction N-acetyl-alpha-D-glucosamine 1-phosphate + UTP + H(+) = UDP-N-acetyl-alpha-D-glucosamine + diphosphate. It functions in the pathway nucleotide-sugar biosynthesis; UDP-N-acetyl-alpha-D-glucosamine biosynthesis; N-acetyl-alpha-D-glucosamine 1-phosphate from alpha-D-glucosamine 6-phosphate (route II): step 2/2. It participates in nucleotide-sugar biosynthesis; UDP-N-acetyl-alpha-D-glucosamine biosynthesis; UDP-N-acetyl-alpha-D-glucosamine from N-acetyl-alpha-D-glucosamine 1-phosphate: step 1/1. Its pathway is bacterial outer membrane biogenesis; LPS lipid A biosynthesis. Functionally, catalyzes the last two sequential reactions in the de novo biosynthetic pathway for UDP-N-acetylglucosamine (UDP-GlcNAc). The C-terminal domain catalyzes the transfer of acetyl group from acetyl coenzyme A to glucosamine-1-phosphate (GlcN-1-P) to produce N-acetylglucosamine-1-phosphate (GlcNAc-1-P), which is converted into UDP-GlcNAc by the transfer of uridine 5-monophosphate (from uridine 5-triphosphate), a reaction catalyzed by the N-terminal domain. In Picosynechococcus sp. (strain ATCC 27264 / PCC 7002 / PR-6) (Agmenellum quadruplicatum), this protein is Bifunctional protein GlmU.